The chain runs to 151 residues: Regulatory protein RecX (151 aa).

This sequence belongs to the RecX family.

The protein localises to the cytoplasm. Functionally, modulates RecA activity. In Haemophilus ducreyi (strain 35000HP / ATCC 700724), this protein is Regulatory protein RecX.